We begin with the raw amino-acid sequence, 715 residues long: Methylmalonyl-CoA mutase large subunit (715 aa).

(R)-methylmalonyl-CoA-binding residues include tyrosine 70, methionine 73, arginine 77, threonine 80, arginine 82, tyrosine 84, and serine 109. Residues phenylalanine 112 and alanine 134 each contribute to the cob(II)alamin site. (R)-methylmalonyl-CoA contacts are provided by threonine 190 and glutamine 192. Cob(II)alamin is bound by residues valine 201 and arginine 202. Residues arginine 202, histidine 239, arginine 278, and serine 280 each contribute to the (R)-methylmalonyl-CoA site. Positions 328, 365, 368, 599, 600, 601, 602, 645, 647, 676, and 699 each coordinate cob(II)alamin. Positions 587-715 (QPRIMIAKMG…AKVLEILLEE (129 aa)) constitute a B12-binding domain.

It belongs to the methylmalonyl-CoA mutase family. Heterodimer of an alpha and a beta chain. Requires adenosylcob(III)alamin as cofactor.

The catalysed reaction is (R)-methylmalonyl-CoA = succinyl-CoA. Catalyzes the isomerization of succinyl-CoA to methylmalonyl-CoA during synthesis of propionate from tricarboxylic acid-cycle intermediates. This Porphyromonas gingivalis (strain ATCC BAA-308 / W83) protein is Methylmalonyl-CoA mutase large subunit (mutB).